The following is a 334-amino-acid chain: Ketol-acid reductoisomerase (NADP(+)) (334 aa).

A KARI N-terminal Rossmann domain is found at 2–181 (TKVYYDETVT…GATRAGVIET (180 aa)). NADP(+)-binding positions include 25–28 (YGSQ), Arg-48, Ser-52, and 82–85 (DEIQ). Residue His-107 is part of the active site. NADP(+) is bound at residue Gly-133. One can recognise a KARI C-terminal knotted domain in the interval 182-327 (TFKEETETDL…RELREMMPFI (146 aa)). Asp-190, Glu-194, Glu-226, and Glu-230 together coordinate Mg(2+). Residue Ser-251 coordinates substrate.

The protein belongs to the ketol-acid reductoisomerase family. Requires Mg(2+) as cofactor.

The enzyme catalyses (2R)-2,3-dihydroxy-3-methylbutanoate + NADP(+) = (2S)-2-acetolactate + NADPH + H(+). The catalysed reaction is (2R,3R)-2,3-dihydroxy-3-methylpentanoate + NADP(+) = (S)-2-ethyl-2-hydroxy-3-oxobutanoate + NADPH + H(+). It participates in amino-acid biosynthesis; L-isoleucine biosynthesis; L-isoleucine from 2-oxobutanoate: step 2/4. Its pathway is amino-acid biosynthesis; L-valine biosynthesis; L-valine from pyruvate: step 2/4. Involved in the biosynthesis of branched-chain amino acids (BCAA). Catalyzes an alkyl-migration followed by a ketol-acid reduction of (S)-2-acetolactate (S2AL) to yield (R)-2,3-dihydroxy-isovalerate. In the isomerase reaction, S2AL is rearranged via a Mg-dependent methyl migration to produce 3-hydroxy-3-methyl-2-ketobutyrate (HMKB). In the reductase reaction, this 2-ketoacid undergoes a metal-dependent reduction by NADPH to yield (R)-2,3-dihydroxy-isovalerate. The protein is Ketol-acid reductoisomerase (NADP(+)) of Staphylococcus epidermidis (strain ATCC 35984 / DSM 28319 / BCRC 17069 / CCUG 31568 / BM 3577 / RP62A).